The following is a 265-amino-acid chain: Mlc titration factor A (265 aa).

Histidine 111, histidine 148, histidine 152, and glutamate 211 together coordinate Zn(2+).

The protein belongs to the MtfA family. As to quaternary structure, interacts with Mlc. It depends on Zn(2+) as a cofactor.

It localises to the cytoplasm. Functionally, involved in the modulation of the activity of the glucose-phosphotransferase system (glucose-PTS). Interacts with the transcriptional repressor Mlc, preventing its interaction with DNA and leading to the modulation of expression of genes regulated by Mlc, including ptsG, which encodes the PTS system glucose-specific EIICB component. In terms of biological role, shows zinc-dependent metallopeptidase activity. This is Mlc titration factor A from Escherichia coli O9:H4 (strain HS).